The sequence spans 657 residues: WD repeat-containing protein 70 (657 aa).

Disordered regions lie at residues 1–21 (MEHS…DPQL) and 43–172 (FEQT…PVQR). Over residues 45-78 (QTRRTAVERSRKTLEAREKEEEMNREKELRKQIE) the composition is skewed to basic and acidic residues. The segment covering 82-105 (PAPSSSSAARERSQSSCRDTSSSD) has biased composition (low complexity). 2 stretches are compositionally biased toward acidic residues: residues 106-119 (SESD…DDEL) and 150-168 (EEGE…EEDN). WD repeat units lie at residues 183 to 222 (HGTK…ASFK), 230 to 271 (CECH…ECIK), 284 to 324 (GHTA…KQKS), 333 to 372 (GKKV…HPKF), 379 to 418 (DPGT…KPLF), 424 to 469 (PTLF…RVYE), and 472 to 511 (ITDA…QRGA). Residue K299 forms a Glycyl lysine isopeptide (Lys-Gly) (interchain with G-Cter in SUMO2) linkage. At K455 the chain carries N6-acetyllysine. Positions 543–568 (REPRQRSTRKQLEKDRLDPLKSHKPE) are enriched in basic and acidic residues. Positions 543 to 584 (REPRQRSTRKQLEKDRLDPLKSHKPEPPVAGPGRGGRVGTHG) are disordered. The segment covering 574-584 (PGRGGRVGTHG) has biased composition (gly residues). Position 582 is a phosphothreonine (T582). Glycyl lysine isopeptide (Lys-Gly) (interchain with G-Cter in SUMO2) cross-links involve residues K593 and K599. Phosphoserine is present on residues S624 and S641. The tract at residues 634–657 (TMFAQVESDDEESKNEPEWKKRKI) is disordered. Residues 647–657 (KNEPEWKKRKI) are compositionally biased toward basic and acidic residues.

This sequence belongs to the WD repeat GAD-1 family.

This Mus musculus (Mouse) protein is WD repeat-containing protein 70 (Wdr70).